A 323-amino-acid polypeptide reads, in one-letter code: Penicillopepsin-1 (323 aa).

Ser3 is a glycosylation site (O-linked (Man...) serine). Thr7 carries O-linked (Man...) threonine glycosylation. Residues 17 to 320 (YITPVTIGGT…DSDGPQLGFA (304 aa)) enclose the Peptidase A1 domain. Active-site residues include Asp33 and Asp213. A disulfide bridge connects residues Cys249 and Cys283.

It belongs to the peptidase A1 family. In terms of assembly, monomer.

It localises to the secreted. It catalyses the reaction Hydrolysis of proteins with broad specificity similar to that of pepsin A, preferring hydrophobic residues at P1 and P1', but also cleaving 20-Gly-|-Glu-21 in the B chain of insulin. Clots milk, and activates trypsinogen.. Its function is as follows. Secreted aspartic endopeptidase that allows assimilation of proteinaceous substrates. The scissile peptide bond is attacked by a nucleophilic water molecule activated by two aspartic residues in the active site. Shows a broad primary substrate specificity. Favors hydrophobic residues at the P1 and P1' positions, but can also activate trypsinogen and hydrolyze the B chain of insulin between positions 'Gly-20' and 'Glu-21'. The chain is Penicillopepsin-1 from Penicillium janthinellum (Penicillium vitale).